Reading from the N-terminus, the 53-residue chain is uncharacterized protein (53 aa).

Residues 28-45 (AIVFSLAVFGIVEAYYYW) traverse the membrane as a helical segment.

Its subcellular location is the host membrane. This is an uncharacterized protein from Acidianus convivator (ABV).